The sequence spans 98 residues: Cytochrome c-552 (98 aa).

The N-terminal stretch at 1–18 is a signal peptide; that stretch reads MKKFLLVAVVGLAGITFA. Residues cysteine 28, cysteine 31, histidine 32, and methionine 77 each coordinate heme c.

The protein belongs to the cytochrome c family. In terms of processing, binds 1 heme c group covalently per subunit.

Reacts with hydrogenase. In Hydrogenobacter thermophilus (strain DSM 6534 / IAM 12695 / TK-6), this protein is Cytochrome c-552.